A 165-amino-acid polypeptide reads, in one-letter code: Histone H1-like protein HC2 (165 aa).

Basic residues-rich tracts occupy residues 1–50 (MLGV…KTVA) and 59–80 (PVAK…KKTV). Residues 1 to 80 (MLGVQKKRST…VRKVAAKKTV (80 aa)) are disordered.

It belongs to the histone H1/H5 family. HCT subfamily.

Functionally, might have a role in establishing the nucleoid structure of elementary bodies. The polypeptide is Histone H1-like protein HC2 (hctB) (Chlamydia trachomatis).